A 223-amino-acid polypeptide reads, in one-letter code: Ribose-5-phosphate isomerase A (223 aa).

Substrate-binding positions include 28-31 (TGST), 81-84 (DGAD), and 94-97 (KGGG). The Proton acceptor role is filled by Glu103. Substrate is bound at residue Lys121.

Belongs to the ribose 5-phosphate isomerase family. In terms of assembly, homodimer.

The catalysed reaction is aldehydo-D-ribose 5-phosphate = D-ribulose 5-phosphate. It functions in the pathway carbohydrate degradation; pentose phosphate pathway; D-ribose 5-phosphate from D-ribulose 5-phosphate (non-oxidative stage): step 1/1. In terms of biological role, catalyzes the reversible conversion of ribose-5-phosphate to ribulose 5-phosphate. The protein is Ribose-5-phosphate isomerase A of Ruthia magnifica subsp. Calyptogena magnifica.